A 400-amino-acid chain; its full sequence is Tryptophan synthase beta chain (400 aa).

Residue Lys90 is modified to N6-(pyridoxal phosphate)lysine.

It belongs to the TrpB family. In terms of assembly, tetramer of two alpha and two beta chains. Pyridoxal 5'-phosphate serves as cofactor.

The catalysed reaction is (1S,2R)-1-C-(indol-3-yl)glycerol 3-phosphate + L-serine = D-glyceraldehyde 3-phosphate + L-tryptophan + H2O. It functions in the pathway amino-acid biosynthesis; L-tryptophan biosynthesis; L-tryptophan from chorismate: step 5/5. Its function is as follows. The beta subunit is responsible for the synthesis of L-tryptophan from indole and L-serine. This is Tryptophan synthase beta chain from Bacillus velezensis (strain DSM 23117 / BGSC 10A6 / LMG 26770 / FZB42) (Bacillus amyloliquefaciens subsp. plantarum).